The chain runs to 138 residues: Large ribosomal subunit protein uL16 (138 aa).

Belongs to the universal ribosomal protein uL16 family. In terms of assembly, part of the 50S ribosomal subunit.

Binds 23S rRNA and is also seen to make contacts with the A and possibly P site tRNAs. The protein is Large ribosomal subunit protein uL16 of Chlamydia caviae (strain ATCC VR-813 / DSM 19441 / 03DC25 / GPIC) (Chlamydophila caviae).